Here is a 389-residue protein sequence, read N- to C-terminus: S-adenosylmethionine synthase 3 (389 aa).

Glutamate 9 serves as a coordination point for Mg(2+). An ATP-binding site is contributed by histidine 15. Residue glutamate 43 coordinates K(+). L-methionine-binding residues include glutamate 56 and glutamine 99. ATP-binding positions include 167–169 (DGK), 235–238 (SGRF), aspartate 246, 252–253 (RK), alanine 269, lysine 273, and lysine 277. Aspartate 246 is a binding site for L-methionine. Residue lysine 277 coordinates L-methionine.

This sequence belongs to the AdoMet synthase family. In terms of assembly, homotetramer. Requires Mn(2+) as cofactor. The cofactor is Mg(2+). Co(2+) serves as cofactor. It depends on K(+) as a cofactor.

Its subcellular location is the cytoplasm. The catalysed reaction is L-methionine + ATP + H2O = S-adenosyl-L-methionine + phosphate + diphosphate. It functions in the pathway amino-acid biosynthesis; S-adenosyl-L-methionine biosynthesis; S-adenosyl-L-methionine from L-methionine: step 1/1. Its function is as follows. Catalyzes the formation of S-adenosylmethionine from methionine and ATP. The reaction comprises two steps that are both catalyzed by the same enzyme: formation of S-adenosylmethionine (AdoMet) and triphosphate, and subsequent hydrolysis of the triphosphate. This Vitis vinifera (Grape) protein is S-adenosylmethionine synthase 3 (METK3).